The sequence spans 399 residues: Exodeoxyribonuclease 7 large subunit (399 aa).

This sequence belongs to the XseA family. In terms of assembly, heterooligomer composed of large and small subunits.

The protein resides in the cytoplasm. It carries out the reaction Exonucleolytic cleavage in either 5'- to 3'- or 3'- to 5'-direction to yield nucleoside 5'-phosphates.. Functionally, bidirectionally degrades single-stranded DNA into large acid-insoluble oligonucleotides, which are then degraded further into small acid-soluble oligonucleotides. This Clostridium acetobutylicum (strain ATCC 824 / DSM 792 / JCM 1419 / IAM 19013 / LMG 5710 / NBRC 13948 / NRRL B-527 / VKM B-1787 / 2291 / W) protein is Exodeoxyribonuclease 7 large subunit.